The primary structure comprises 171 residues: NRR repressor homolog 2 (171 aa).

Basic and acidic residues predominate over residues 1–12; sequence MEARLSTGEKTK. Disordered stretches follow at residues 1–45, 65–94, and 119–143; these read MEAR…QQQM, AALP…APWR, and TTKG…EEDK. The segment covering 26–43 has biased composition (acidic residues); sequence PEEETAAETTTSEEEEQQ.

Belongs to the NPR1-interactor family. As to quaternary structure, interacts with NPR1/NH1. Interacts with NPR3/NH3.

It is found in the nucleus. Binds to and weakly represses NPR1/NH1-mediated transcriptional activation of LG2 in vitro. This chain is NRR repressor homolog 2, found in Oryza sativa subsp. japonica (Rice).